Here is a 190-residue protein sequence, read N- to C-terminus: MEAEDGARVRNEDVPPQNQDLSFLQPSVTAFMSEYGWYLLFGCVGVYLLIQHLRKSRSSTQTRSSSGSAEAHDVGSVVRRQEALEASRRRMQEEQDARAAEFREKQRMLEEEKRRQKIEMWDSMQEGKSYKGSAKVAQQNTEEAASSSSLRPKTEKKPLRSSGYSPLSGDAGGSCSWRPGRRGPSAGGUG.

Positions 1 to 13 are enriched in basic and acidic residues; the sequence is MEAEDGARVRNED. The interval 1 to 20 is disordered; that stretch reads MEAEDGARVRNEDVPPQNQD. The chain crosses the membrane as a helical span at residues 30 to 50; sequence AFMSEYGWYLLFGCVGVYLLI. The span at 58-68 shows a compositional bias: low complexity; sequence SSTQTRSSSGS. The interval 58–190 is disordered; it reads SSTQTRSSSG…RRGPSAGGUG (133 aa). Positions 79-120 are enriched in basic and acidic residues; it reads RRQEALEASRRRMQEEQDARAAEFREKQRMLEEEKRRQKIEM. The span at 136–151 shows a compositional bias: polar residues; that stretch reads VAQQNTEEAASSSSLR. A non-standard amino acid (selenocysteine) is located at residue Sec-189.

Belongs to the selenoprotein S family.

The protein localises to the endoplasmic reticulum membrane. It is found in the cytoplasm. In terms of biological role, involved in the degradation process of misfolded endoplasmic reticulum (ER) luminal proteins. Participates in the transfer of misfolded proteins from the ER to the cytosol, where they are destroyed by the proteasome in a ubiquitin-dependent manner. The polypeptide is Selenoprotein S (vimp) (Danio rerio (Zebrafish)).